A 340-amino-acid polypeptide reads, in one-letter code: Extracellular matrix protein-binding protein emp (340 aa).

Residues 1-26 (MKKKLLVLTMSTLFATQLINSNHANA) form the signal peptide.

The protein localises to the cell surface. Functionally, adhesin that binds to the host cell extracellular matrix proteins fibronectin, fibrinogen, collagen, and vitronectin. In Staphylococcus aureus, this protein is Extracellular matrix protein-binding protein emp (emp).